The chain runs to 210 residues: uncharacterized protein (210 aa).

The PfpI endopeptidase domain maps to R4–V180. C110 (nucleophile) is an active-site residue.

This sequence belongs to the peptidase C56 family.

This is an uncharacterized protein from Bacillus subtilis (strain 168).